The primary structure comprises 332 residues: Probable allantoicase (332 aa).

It belongs to the allantoicase family.

It carries out the reaction allantoate + H2O = (S)-ureidoglycolate + urea. It participates in nitrogen metabolism; (S)-allantoin degradation; (S)-ureidoglycolate from allantoate (aminidohydrolase route): step 1/1. The sequence is that of Probable allantoicase from Pseudomonas paraeruginosa (strain DSM 24068 / PA7) (Pseudomonas aeruginosa (strain PA7)).